A 205-amino-acid chain; its full sequence is MRFLAVATMVVALMVPWSVRADGVESLKAFFKSTSAMRAHFRQVVTDAQGNKVQEVEGHMQLQRPGKFRWDYNKPYVQQIVGDGEKVWLYDPDLNQLTVRPMSKAIGSSPASLLAGAQDAERNFTLTTVIRSDGLAWAQAVPKAEDSGFDKVLLGFKGDELQKMELHDSFGHVTSIQFSQLQRNPAIANSSFQFVVPAGADVVGE.

The first 21 residues, 1–21 (MRFLAVATMVVALMVPWSVRA), serve as a signal peptide directing secretion.

This sequence belongs to the LolA family. As to quaternary structure, monomer.

Its subcellular location is the periplasm. In terms of biological role, participates in the translocation of lipoproteins from the inner membrane to the outer membrane. Only forms a complex with a lipoprotein if the residue after the N-terminal Cys is not an aspartate (The Asp acts as a targeting signal to indicate that the lipoprotein should stay in the inner membrane). This is Outer-membrane lipoprotein carrier protein from Methylobacillus flagellatus (strain ATCC 51484 / DSM 6875 / VKM B-1610 / KT).